The chain runs to 156 residues: MDTQMCALFAQPLTLLPDLNICSWQTVNGSQRTFFVWTWTMTSSGLRTRAINLKQWNGLTYRSYAILSWNPRETPLHLTRVTPSPQVTKGSLSTTSIPINTKIQLICLPAVAMLATPPKTTDNCRTSWAALQMLLLLWHLSSWIKTQRRWRISLTE.

In terms of biological role, may be required for viral persistance in the host. This is Protein L* from Theiler's murine encephalomyelitis virus (strain DA) (TMEV).